A 278-amino-acid chain; its full sequence is Undecaprenyl-diphosphatase (278 aa).

The next 8 membrane-spanning stretches (helical) occupy residues Tyr-3 to Ser-23, Val-42 to Phe-62, Phe-88 to Ile-108, Ile-112 to Tyr-132, Ile-152 to Met-172, Leu-190 to Ser-210, Gly-225 to Leu-245, and Val-253 to Ile-273.

It belongs to the UppP family.

It localises to the cell membrane. The catalysed reaction is di-trans,octa-cis-undecaprenyl diphosphate + H2O = di-trans,octa-cis-undecaprenyl phosphate + phosphate + H(+). Catalyzes the dephosphorylation of undecaprenyl diphosphate (UPP). The sequence is that of Undecaprenyl-diphosphatase from Saccharolobus solfataricus (strain ATCC 35092 / DSM 1617 / JCM 11322 / P2) (Sulfolobus solfataricus).